A 1059-amino-acid chain; its full sequence is Microtubule-associated protein 1S (1059 aa).

Positions 1–797 are necessary for the microtubule-organizing center localization; the sequence is MAAVAGSGAA…SESLPTLSDS (797 aa). Phosphoserine occurs at positions 321 and 472. Disordered regions lie at residues 461–733 and 751–942; these read PQDL…ASPH and VPMA…SATP. Composition is skewed to basic and acidic residues over residues 466-486 and 494-530; these read GPGRAESKESVGSRDSSKREG and PGQERPGVARKEPARAEAPRKTEKEAKTPRELKKDPK. The segment covering 547–557 has biased composition (polar residues); that stretch reads SVPNLKKTNAQ. Position 582 is a phosphoserine (Ser582). A compositionally biased stretch (low complexity) spans 591–603; the sequence is ASPPSAACGSPAS. Phosphothreonine is present on Thr638. Ser640 carries the phosphoserine modification. Residues 642–652 are compositionally biased toward basic and acidic residues; the sequence is ESHRSPAEGSE. 2 positions are modified to phosphoserine: Ser655 and Ser657. The tract at residues 666 to 1059 is necessary for interaction with RASSF1 isoform A and isoform C; that stretch reads PDASPTVTTP…DAFPACKVEF (394 aa). The span at 670-680 shows a compositional bias: low complexity; it reads PTVTTPTVTTP. The tract at residues 714-966 is necessary for association with microtubules; the sequence is EAGLSLPLRG…GSSAHLVDEE (253 aa). Phosphoserine occurs at positions 731 and 759. The span at 759–769 shows a compositional bias: low complexity; the sequence is SPGSSNDSSAR. The segment covering 783–796 has biased composition (polar residues); that stretch reads PPTSVSESLPTLSD. Ser809 is modified (phosphoserine). Over residues 825 to 836 the composition is skewed to pro residues; sequence PDPLKVPPPLPD. Composition is skewed to low complexity over residues 873-887 and 923-936; these read AAAPKATPVAAAKTK and TATRGPSGSASSRP. The segment at 960 to 1059 is necessary for association with actin; that stretch reads AHLVDEEFFQ…DAFPACKVEF (100 aa). The segment at 967-991 is necessary for the mitochondrial aggregation and genome destruction; the sequence is FFQRVRALCYVISGQDQRKEEGMRA.

This sequence belongs to the MAP1 family. As to quaternary structure, heterodimer of a heavy and a light chain. Interacts with microtubules and actin. Both MAP1S heavy and light chains interact with microtubules. MAP1S light chain interacts with actin. Interacts (via C-terminus) with GAN (via Kelch domains). Interacts with ESR1, LRPPRC, RASSF1 isoform A and isoform C, microtubules and VCY2. Interacts with WDR47 (via N-terminus of light chain). As to expression, expressed in neurons (at protein level). Expressed in spermatocytes, spermatids and spermatozoa. Expressed in the cerebral cortex. Highly expressed in testis. Moderately expressed in the brain, colon, heart, kidney, liver, lung, placenta, small intestine, spleen and stomach. Weakly expressed in muscle.

It is found in the nucleus. The protein localises to the cytoplasm. It localises to the cytosol. The protein resides in the cytoskeleton. Its subcellular location is the spindle. Functionally, microtubule-associated protein that mediates aggregation of mitochondria resulting in cell death and genomic destruction (MAGD). Plays a role in anchoring the microtubule organizing center to the centrosomes. Binds to DNA. Plays a role in apoptosis. Involved in the formation of microtubule bundles. The polypeptide is Microtubule-associated protein 1S (MAP1S) (Homo sapiens (Human)).